The primary structure comprises 288 residues: DegV domain-containing protein DR_1903 (288 aa).

The DegV domain occupies 2–280; sequence IAVTTESTAD…PGVVAVLAFP (279 aa). Residues Thr59 and Thr93 each coordinate hexadecanoate.

Its function is as follows. May bind long-chain fatty acids, such as palmitate, and may play a role in lipid transport or fatty acid metabolism. The protein is DegV domain-containing protein DR_1903 of Deinococcus radiodurans (strain ATCC 13939 / DSM 20539 / JCM 16871 / CCUG 27074 / LMG 4051 / NBRC 15346 / NCIMB 9279 / VKM B-1422 / R1).